Here is a 234-residue protein sequence, read N- to C-terminus: Homeobox protein ceh-51 (234 aa).

2 disordered regions span residues 128–154 and 209–234; these read PPSF…RTPF and QIKQ…HVIS. A DNA-binding region (homeobox) is located at residues 147 to 206; it reads RRGARTPFSDSQLYALRTRFEQCDTIKVDERRKLGAVIGLSPEQIKIWFQNRRFKLRKEK. Basic and acidic residues predominate over residues 220–234; sequence SAKEEAEEDQKHVIS.

This sequence belongs to the NK-2 homeobox family.

It is found in the nucleus. Functionally, required for mesoderm development, including specification of muscle and coelomocyte precursors. The sequence is that of Homeobox protein ceh-51 from Caenorhabditis elegans.